Reading from the N-terminus, the 437-residue chain is GTPase Der (437 aa).

EngA-type G domains follow at residues Asn-3–Gly-167 and Pro-176–Thr-352. GTP-binding positions include Gly-9 to Ser-16, Asp-56 to Trp-60, Asn-119 to Asp-122, Gly-182 to Ser-189, Asp-229 to Ile-233, and Asn-294 to Asp-297. The KH-like domain maps to Thr-353–Lys-437.

The protein belongs to the TRAFAC class TrmE-Era-EngA-EngB-Septin-like GTPase superfamily. EngA (Der) GTPase family. Associates with the 50S ribosomal subunit.

Functionally, GTPase that plays an essential role in the late steps of ribosome biogenesis. The protein is GTPase Der of Phocaeicola vulgatus (strain ATCC 8482 / DSM 1447 / JCM 5826 / CCUG 4940 / NBRC 14291 / NCTC 11154) (Bacteroides vulgatus).